Reading from the N-terminus, the 277-residue chain is Large ribosomal subunit protein uL15c (277 aa).

The N-terminal 67 residues, 1–67 (MATPLSISSN…FARPLVVVSQ (67 aa)), are a transit peptide targeting the chloroplast. Threonine 68 is modified (N-acetylthreonine). Positions 81-125 (FRLDNLGPQPGSRKKQKRKGRGISAGQGASCGFGMRGQKSRSGPG) are disordered. The segment covering 92 to 101 (SRKKQKRKGR) has biased composition (basic residues). Positions 103-115 (ISAGQGASCGFGM) are enriched in gly residues.

It belongs to the universal ribosomal protein uL15 family. Part of the 50S ribosomal subunit.

Its subcellular location is the plastid. The protein localises to the chloroplast. The sequence is that of Large ribosomal subunit protein uL15c (RPL15) from Arabidopsis thaliana (Mouse-ear cress).